Reading from the N-terminus, the 305-residue chain is tRNA pseudouridine synthase B (305 aa).

Aspartate 50 (nucleophile) is an active-site residue.

It belongs to the pseudouridine synthase TruB family. Type 1 subfamily.

The enzyme catalyses uridine(55) in tRNA = pseudouridine(55) in tRNA. Responsible for synthesis of pseudouridine from uracil-55 in the psi GC loop of transfer RNAs. This is tRNA pseudouridine synthase B from Rhodococcus jostii (strain RHA1).